The following is a 408-amino-acid chain: tRNA-specific 2-thiouridylase MnmA (408 aa).

ATP contacts are provided by residues 27-34 and leucine 53; that span reads AMSGGVDS. Cysteine 121 functions as the Nucleophile in the catalytic mechanism. An intrachain disulfide couples cysteine 121 to cysteine 222. Glycine 145 lines the ATP pocket. An interaction with tRNA region spans residues 172–174; sequence RDQ. The Cysteine persulfide intermediate role is filled by cysteine 222.

It belongs to the MnmA/TRMU family.

Its subcellular location is the cytoplasm. The catalysed reaction is S-sulfanyl-L-cysteinyl-[protein] + uridine(34) in tRNA + AH2 + ATP = 2-thiouridine(34) in tRNA + L-cysteinyl-[protein] + A + AMP + diphosphate + H(+). In terms of biological role, catalyzes the 2-thiolation of uridine at the wobble position (U34) of tRNA, leading to the formation of s(2)U34. The chain is tRNA-specific 2-thiouridylase MnmA from Rhizobium etli (strain CIAT 652).